The primary structure comprises 348 residues: sn-glycerol-3-phosphate import ATP-binding protein UgpC (348 aa).

One can recognise an ABC transporter domain in the interval 4 to 235 (IQLSNIKKQY…PETTFVADFI (232 aa)). 37–44 (GPSGCGKS) contributes to the ATP binding site.

The protein belongs to the ABC transporter superfamily. sn-glycerol-3-phosphate importer (TC 3.A.1.1.3) family. As to quaternary structure, the complex is composed of two ATP-binding proteins (UgpC), two transmembrane proteins (UgpA and UgpE) and a solute-binding protein (UgpB).

It is found in the cell inner membrane. The catalysed reaction is sn-glycerol 3-phosphate(out) + ATP + H2O = sn-glycerol 3-phosphate(in) + ADP + phosphate + H(+). Part of the ABC transporter complex UgpBAEC involved in sn-glycerol-3-phosphate (G3P) import. Responsible for energy coupling to the transport system. The sequence is that of sn-glycerol-3-phosphate import ATP-binding protein UgpC from Bartonella quintana (strain Toulouse) (Rochalimaea quintana).